A 256-amino-acid polypeptide reads, in one-letter code: UPF0280 protein MTH_727 (256 aa).

This sequence belongs to the UPF0280 family.

The chain is UPF0280 protein MTH_727 from Methanothermobacter thermautotrophicus (strain ATCC 29096 / DSM 1053 / JCM 10044 / NBRC 100330 / Delta H) (Methanobacterium thermoautotrophicum).